Here is a 305-residue protein sequence, read N- to C-terminus: Insulin-like growth factor-binding protein 2 (305 aa).

The signal sequence occupies residues 1-34 (MLPRLGGPALPLLLPSLLLLLLLGAGGCGPGVRA). Residues 36 to 118 (VLFRCPPCTP…VTGAGTCEKR (83 aa)) form the IGFBP N-terminal domain. Disulfide bonds link cysteine 40–cysteine 68, cysteine 43–cysteine 70, cysteine 51–cysteine 71, cysteine 59–cysteine 74, cysteine 82–cysteine 95, cysteine 89–cysteine 115, cysteine 207–cysteine 241, cysteine 252–cysteine 263, and cysteine 265–cysteine 286. A Thyroglobulin type-1 domain is found at 204 to 286 (RTPCQQELDQ…APTIRGDPEC (83 aa)). Positions 281–283 (RGD) match the Cell attachment site motif.

Interacts with IGF1. Interacts with IGF2. Interacts (via RGD motif) with integrin alpha5/ITGA5; this interaction induces cell migration, adhesion or apoptosis according to the context. Interacts with PTPRB; this interaction leads to PTPRB dimerization and inactivation. Post-translationally, cleaved by MMP9 leading to release of free IGF2 from IGFBP2-IGF2 complex, which contributes to enhance the motility and the growth of astrocytes. In terms of processing, O-glycosylated. Highly expressed in adult liver, but also in kidney, lung, brain, spleen, testis and ovary.

It is found in the secreted. Functionally, multifunctional protein that plays a critical role in regulating the availability of IGFs such as IGF1 and IGF2 to their receptors and thereby regulates IGF-mediated cellular processes including proliferation, differentiation, and apoptosis in a cell-type specific manner. Functions coordinately with receptor protein tyrosine phosphatase beta/PTPRB and the IGF1 receptor to regulate IGF1-mediated signaling by stimulating the phosphorylation of PTEN leading to its inactivation and AKT1 activation. Plays a positive role in cell migration via interaction with integrin alpha5/ITGA5 through an RGD motif. Additionally, interaction with ITGA5/ITGB1 enhances the adhesion of endothelial progenitor cells to endothelial cells. Upon mitochondrial damage, facilitates apoptosis with ITGA5 of podocytes, and then activates the phosphorylation of focal adhesion kinase (FAK)-mediated mitochondrial injury. The sequence is that of Insulin-like growth factor-binding protein 2 (Igfbp2) from Mus musculus (Mouse).